A 318-amino-acid polypeptide reads, in one-letter code: Protoheme IX farnesyltransferase (318 aa).

9 consecutive transmembrane segments (helical) span residues 29–49 (IIPL…QGQV), 51–71 (PVLL…AQTI), 102–122 (LIFA…FANL), 123–143 (LAAS…THWL), 151–171 (IVIG…AVTG), 179–199 (LIFA…ALMI), 219–239 (ATVK…LLLV), 241–261 (PLHS…AVFI), and 280–300 (LFLY…IDSL).

Belongs to the UbiA prenyltransferase family. Protoheme IX farnesyltransferase subfamily.

The protein resides in the cell inner membrane. It catalyses the reaction heme b + (2E,6E)-farnesyl diphosphate + H2O = Fe(II)-heme o + diphosphate. It functions in the pathway porphyrin-containing compound metabolism; heme O biosynthesis; heme O from protoheme: step 1/1. Converts heme B (protoheme IX) to heme O by substitution of the vinyl group on carbon 2 of heme B porphyrin ring with a hydroxyethyl farnesyl side group. This is Protoheme IX farnesyltransferase from Trichormus variabilis (strain ATCC 29413 / PCC 7937) (Anabaena variabilis).